We begin with the raw amino-acid sequence, 503 residues long: ATP synthase subunit alpha (503 aa).

170 to 177 (GDRQTGKT) is a binding site for ATP.

Belongs to the ATPase alpha/beta chains family. F-type ATPases have 2 components, CF(1) - the catalytic core - and CF(0) - the membrane proton channel. CF(1) has five subunits: alpha(3), beta(3), gamma(1), delta(1), epsilon(1). CF(0) has three main subunits: a(1), b(2) and c(9-12). The alpha and beta chains form an alternating ring which encloses part of the gamma chain. CF(1) is attached to CF(0) by a central stalk formed by the gamma and epsilon chains, while a peripheral stalk is formed by the delta and b chains.

The protein localises to the cell inner membrane. The enzyme catalyses ATP + H2O + 4 H(+)(in) = ADP + phosphate + 5 H(+)(out). Produces ATP from ADP in the presence of a proton gradient across the membrane. The alpha chain is a regulatory subunit. This Thermotoga neapolitana (strain ATCC 49049 / DSM 4359 / NBRC 107923 / NS-E) protein is ATP synthase subunit alpha.